Consider the following 1403-residue polypeptide: Baculoviral IAP repeat-containing protein 1 (1403 aa).

BIR repeat units follow at residues 60 to 127 (EAKR…CGFL), 159 to 227 (EEAR…CEFL), and 278 to 345 (EELR…CPFL). Residues C315, C318, H335, and C342 each contribute to the Zn(2+) site. The 295-residue stretch at 464–758 (SVMCVEGEAG…EFLAGMRLIE (295 aa)) folds into the NACHT domain. 473-478 (GSGKTV) lines the ATP pocket.

In terms of assembly, interacts (via NACHT domain) with APAF1 (via CARD and NACHT domains). Interacts with C.violaceum needle protein CprI. Expressed in motor neurons, but not in sensory neurons. Found in liver and placenta, and to a lesser extent in spinal cord.

In terms of biological role, anti-apoptotic protein which acts by inhibiting the activities of CASP3, CASP7 and CASP9. Can inhibit the autocleavage of pro-CASP9 and cleavage of pro-CASP3 by CASP9. Capable of inhibiting CASP9 autoproteolysis at 'Asp-315' and decreasing the rate of auto proteolysis at 'Asp-330'. Acts as a mediator of neuronal survival in pathological conditions. Prevents motor-neuron apoptosis induced by a variety of signals. Possible role in the prevention of spinal muscular atrophy that seems to be caused by inappropriate persistence of motor-neuron apoptosis: mutated or deleted forms of NAIP have been found in individuals with severe spinal muscular atrophy. Its function is as follows. Acts as a sensor component of the NLRC4 inflammasome that specifically recognizes and binds needle protein CprI from pathogenic bacteria C.violaceum. Association of pathogenic bacteria proteins drives in turn drive assembly and activation of the NLRC4 inflammasome, promoting caspase-1 activation, cytokine production and macrophage pyroptosis. The NLRC4 inflammasome is activated as part of the innate immune response to a range of intracellular bacteria such as C.violaceum and L.pneumophila. In Homo sapiens (Human), this protein is Baculoviral IAP repeat-containing protein 1 (NAIP).